The sequence spans 830 residues: Phenylalanine--tRNA ligase beta subunit (830 aa).

The tRNA-binding domain maps to 39 to 158 (GQSLDGVVVG…DDTPVGTPFP (120 aa)). Residues 417–492 (PAEKTIALRP…RLHGYDQIPE (76 aa)) form the B5 domain. The Mg(2+) site is built by Asp470, Asp476, Glu479, and Glu480. Residues 490–510 (IPEPERVPVPSRTPEQPPEET) form a disordered region. An FDX-ACB domain is found at 736 to 828 (SRFPVVDRDL…LAENHGARLR (93 aa)).

It belongs to the phenylalanyl-tRNA synthetase beta subunit family. Type 1 subfamily. As to quaternary structure, tetramer of two alpha and two beta subunits. Mg(2+) serves as cofactor.

It is found in the cytoplasm. It carries out the reaction tRNA(Phe) + L-phenylalanine + ATP = L-phenylalanyl-tRNA(Phe) + AMP + diphosphate + H(+). In Salinibacter ruber (strain DSM 13855 / M31), this protein is Phenylalanine--tRNA ligase beta subunit.